A 380-amino-acid polypeptide reads, in one-letter code: Putative glutamate--cysteine ligase 2 (380 aa).

This sequence belongs to the glutamate--cysteine ligase type 2 family. YbdK subfamily.

It carries out the reaction L-cysteine + L-glutamate + ATP = gamma-L-glutamyl-L-cysteine + ADP + phosphate + H(+). In terms of biological role, ATP-dependent carboxylate-amine ligase which exhibits weak glutamate--cysteine ligase activity. In Pseudomonas entomophila (strain L48), this protein is Putative glutamate--cysteine ligase 2.